The chain runs to 149 residues: Cytochrome c-type biogenesis protein CcmE (149 aa).

Residues 1–7 (MKKRHQR) lie on the Cytoplasmic side of the membrane. Residues 8–28 (LFLVLGVVAGVSVATALVLNA) traverse the membrane as a helical; Signal-anchor for type II membrane protein segment. Residues 29–149 (FRDNMTFFIT…EHSVDEVGDY (121 aa)) are Periplasmic-facing. 2 residues coordinate heme: H123 and Y127.

This sequence belongs to the CcmE/CycJ family.

The protein localises to the cell inner membrane. In terms of biological role, heme chaperone required for the biogenesis of c-type cytochromes. Transiently binds heme delivered by CcmC and transfers the heme to apo-cytochromes in a process facilitated by CcmF and CcmH. The polypeptide is Cytochrome c-type biogenesis protein CcmE (Halorhodospira halophila (strain DSM 244 / SL1) (Ectothiorhodospira halophila (strain DSM 244 / SL1))).